Reading from the N-terminus, the 644-residue chain is MDDIADRMRMDAGEVTLVNHNSVFKTHLLPQTGFPEDQLSLSDQQILSSRQGHLDRSFTCSTRSAAYNPSYYSDNPSSDSFLGSGDLRTFGQSANGQWRNSTPSSSSSLQKSRNSRSLYLETRKTSSGLSNSFAGKSNHHCHVSAYEKSFPIKPVPSPSWSGSCRRSLLSPKKTQRRHVSTAEETVQEEEREIYRQLLQMVTGKQFTIAKPTTHFPLHLSRCLSSSKNTLKDSLFKNGNSCASQIIGSDTSSSGSASILTNQEQLSHSVYSLSSYTPDVAFGSKDSGTLHHPHHHHSVPHQPDNLAASNTQSEGSDSVILLKVKDSQTPTPSSTFFQAELWIKELTSVYDSRARERLRQIEEQKALALQLQNQRLQEREHSVHDSVELHLRVPLEKEIPVTVVQETQKKGHKLTDSEDEFPEITEEMEKEIKNVFRNGNQDEVLSEAFRLTITRKDIQTLNHLNWLNDEIINFYMNMLMERSKEKGLPSVHAFNTFFFTKLKTAGYQAVKRWTKKVDVFSVDILLVPIHLGVHWCLAVVDFRKKNITYYDSMGGINNEACRILLQYLKQESIDKKRKEFDTNGWQLFSKKSQEIPQQMNGSDCGMFACKYADCITKDRPINFTQQHMPYFRKRMVWEILHRKLL.

The interval 1–200 (MDDIADRMRM…REIYRQLLQM (200 aa)) is interaction with CCAR2. Residues serine 57, serine 117, serine 132, and serine 157 each carry the phosphoserine modification. A disordered region spans residues 92-117 (QSANGQWRNSTPSSSSSLQKSRNSRS). The segment covering 99-117 (RNSTPSSSSSLQKSRNSRS) has biased composition (low complexity). 2 disordered regions span residues 156–184 (PSPSWSGSCRRSLLSPKKTQRRHVSTAEE) and 283–312 (SKDSGTLHHPHHHHSVPHQPDNLAASNTQS). Residues 171-177 (PKKTQRR) carry the Nuclear localization signal motif. The segment at 450–613 (LTITRKDIQT…GMFACKYADC (164 aa)) is protease. Catalysis depends on residues histidine 533 and aspartate 550. Positions 574–577 (KKRK) match the Nuclear localization signal motif. Cysteine 603 acts as the Nucleophile in catalysis. The short motif at 628–634 (PYFRKRM) is the Nuclear localization signal element. The Nuclear export signal signature appears at 635–644 (VWEILHRKLL).

This sequence belongs to the peptidase C48 family. Interacts with RBM33; promoting ALKBH5 desumoylation and subsequent activation. In terms of tissue distribution, highly expressed in testis. Expressed at lower levels in thymus, pancreas, spleen, liver, ovary and small intestine.

Its subcellular location is the nucleus. The protein localises to the cytoplasm. Functionally, protease that catalyzes two essential functions in the SUMO pathway. The first is the hydrolysis of an alpha-linked peptide bond at the C-terminal end of the small ubiquitin-like modifier (SUMO) propeptides, SUMO1, SUMO2 and SUMO3 leading to the mature form of the proteins. The second is the deconjugation of SUMO1, SUMO2 and SUMO3 from targeted proteins, by cleaving an epsilon-linked peptide bond between the C-terminal glycine of the mature SUMO and the lysine epsilon-amino group of the target protein. Deconjugates SUMO1 from HIPK2. Deconjugates SUMO1 from HDAC1 and BHLHE40/DEC1, which decreases its transcriptional repression activity. Deconjugates SUMO1 from CLOCK, which decreases its transcriptional activation activity. Deconjugates SUMO2 from MTA1. Inhibits N(6)-methyladenosine (m6A) RNA methylation by mediating SUMO1 deconjugation from METTL3 and ALKBH5: METTL3 inhibits the m6A RNA methyltransferase activity, while ALKBH5 desumoylation promotes m6A demethylation. Desumoylates CCAR2 which decreases its interaction with SIRT1. Deconjugates SUMO1 from GPS2. This is Sentrin-specific protease 1 (SENP1) from Homo sapiens (Human).